A 1069-amino-acid chain; its full sequence is Protogenin B (1069 aa).

The signal sequence occupies residues 1 to 26 (MGSVRWKTHQQWLIIFWILSFSGVFG). The Extracellular portion of the chain corresponds to 27-936 (FSELWFSIEP…LYHIDEKSMS (910 aa)). Ig-like domains lie at 30–117 (LWFS…ARLT), 122–208 (LVFS…AELV), 221–308 (PLII…GNVT), and 312–396 (PSLV…SRLI). Cystine bridges form between cysteine 51/cysteine 100 and cysteine 143/cysteine 191. Asparagine 81, asparagine 88, asparagine 180, and asparagine 229 each carry an N-linked (GlcNAc...) asparagine glycan. Cysteine 242 and cysteine 290 are oxidised to a cystine. N-linked (GlcNAc...) asparagine glycans are attached at residues asparagine 299 and asparagine 306. Residues 317-336 (KPESQTRPRAGTARFSCQAE) form a disordered region. The cysteines at positions 333 and 380 are disulfide-linked. 5 consecutive Fibronectin type-III domains span residues 406-500 (APRN…TLED), 502-601 (PLRT…TPKT), 608-701 (PAPN…CPST), 711-804 (PPDH…TLLE), and 809-904 (PPES…VKGK). N-linked (GlcNAc...) asparagine glycans are attached at residues asparagine 458, asparagine 473, and asparagine 560. Over residues 590-605 (PSAWSSHRTPKTSSAT) the composition is skewed to polar residues. Residues 590–609 (PSAWSSHRTPKTSSATVPPA) form a disordered region. Asparagine 618, asparagine 720, and asparagine 834 each carry an N-linked (GlcNAc...) asparagine glycan. Residues 937–957 (GIIVGVCIALSCIILCIFILL) traverse the membrane as a helical segment. The Cytoplasmic portion of the chain corresponds to 958–1069 (SKTQTQKSAS…KTVLCYEDEA (112 aa)).

This sequence belongs to the immunoglobulin superfamily. DCC family. In terms of tissue distribution, initially expressed in the ventral forebrain and ventral spinal cord. Later, also expressed in the midbrain and in parts of the diencephalon and hindbrain.

The protein localises to the membrane. Functionally, may play a role in anteroposterior axis elongation. The protein is Protogenin B of Danio rerio (Zebrafish).